The chain runs to 430 residues: Aspartate aminotransferase, mitochondrial (430 aa).

Residues 1–29 (MALLHSGRVLSGMAAAFHPGLAAAASARA) constitute a mitochondrion transit peptide. The residue at position 48 (Thr48) is a Phosphothreonine. Position 59 is an N6-acetyllysine (Lys59). A substrate-binding site is contributed by Gly65. Position 73 is an N6-acetyllysine; alternate (Lys73). An N6-succinyllysine; alternate modification is found at Lys73. Residue Lys82 is modified to N6-acetyllysine. Position 90 is an N6-acetyllysine; alternate (Lys90). Lys90 is subject to N6-succinyllysine; alternate. Tyr96 carries the post-translational modification 3'-nitrotyrosine; alternate. A Phosphotyrosine; alternate modification is found at Tyr96. 2 positions are modified to N6-acetyllysine; alternate: Lys107 and Lys122. Residues Lys107 and Lys122 each carry the N6-succinyllysine; alternate modification. Ser143 carries the phosphoserine modification. Position 159 is an N6-acetyllysine; alternate (Lys159). Lys159 is modified (N6-succinyllysine; alternate). Trp162 provides a ligand contact to substrate. N6-acetyllysine; alternate is present on Lys185. At Lys185 the chain carries N6-succinyllysine; alternate. Position 215 (Asn215) interacts with substrate. The residue at position 227 (Lys227) is an N6-succinyllysine. Lys234 is modified (N6-acetyllysine). An N6-acetyllysine; alternate mark is found at Lys279 and Lys296. Position 279 is an N6-(pyridoxal phosphate)lysine; alternate (Lys279). Lys296 bears the N6-succinyllysine; alternate mark. The residue at position 302 (Lys302) is an N6-acetyllysine. Position 309 is an N6-acetyllysine; alternate (Lys309). An N6-succinyllysine; alternate modification is found at Lys309. An Asymmetric dimethylarginine modification is found at Arg313. Position 338 is an N6-acetyllysine; alternate (Lys338). Position 338 is an N6-succinyllysine; alternate (Lys338). Lys345 carries the N6-acetyllysine modification. Position 363 is an N6-acetyllysine; alternate (Lys363). Residue Lys363 is modified to N6-succinyllysine; alternate. Residues Lys364 and Lys387 each carry the N6-acetyllysine modification. Residues Lys396 and Lys404 each carry the N6-acetyllysine; alternate modification. 2 positions are modified to N6-succinyllysine; alternate: Lys396 and Lys404. Substrate is bound at residue Arg407.

This sequence belongs to the class-I pyridoxal-phosphate-dependent aminotransferase family. Homodimer. It depends on pyridoxal 5'-phosphate as a cofactor. Expressed in all tissues tested: liver, pancreas, kidney, heart, spleen, arterioles, and lymphocytes.

It is found in the mitochondrion matrix. Its subcellular location is the cell membrane. It carries out the reaction L-aspartate + 2-oxoglutarate = oxaloacetate + L-glutamate. The catalysed reaction is L-kynurenine + 2-oxoglutarate = kynurenate + L-glutamate + H2O. Functionally, catalyzes the irreversible transamination of the L-tryptophan metabolite L-kynurenine to form kynurenic acid (KA). As a member of the malate-aspartate shuttle, it has a key role in the intracellular NAD(H) redox balance. Is important for metabolite exchange between mitochondria and cytosol, and for amino acid metabolism. Facilitates cellular uptake of long-chain free fatty acids. This is Aspartate aminotransferase, mitochondrial (Got2) from Rattus norvegicus (Rat).